We begin with the raw amino-acid sequence, 56 residues long: Large ribosomal subunit protein bL32A (56 aa).

The segment at 1-56 (MAVPARRTSKAKKNKRRTHKGLTAPGLSRDSETGEYRMSHRISPDGTYKGRTIIEK) is disordered. Basic residues predominate over residues 7-20 (RTSKAKKNKRRTHK). Residues 29-38 (RDSETGEYRM) show a composition bias toward basic and acidic residues.

The protein belongs to the bacterial ribosomal protein bL32 family.

The chain is Large ribosomal subunit protein bL32A (rpmF1) from Listeria innocua serovar 6a (strain ATCC BAA-680 / CLIP 11262).